We begin with the raw amino-acid sequence, 342 residues long: Methylthioribose-1-phosphate isomerase (342 aa).

Residues 49–51, arginine 86, and glutamine 187 contribute to the substrate site; that span reads RGA. Aspartate 228 (proton donor) is an active-site residue. 238–239 lines the substrate pocket; that stretch reads NK.

The protein belongs to the eIF-2B alpha/beta/delta subunits family. MtnA subfamily.

The enzyme catalyses 5-(methylsulfanyl)-alpha-D-ribose 1-phosphate = 5-(methylsulfanyl)-D-ribulose 1-phosphate. It participates in amino-acid biosynthesis; L-methionine biosynthesis via salvage pathway; L-methionine from S-methyl-5-thio-alpha-D-ribose 1-phosphate: step 1/6. Catalyzes the interconversion of methylthioribose-1-phosphate (MTR-1-P) into methylthioribulose-1-phosphate (MTRu-1-P). This chain is Methylthioribose-1-phosphate isomerase, found in Klebsiella pneumoniae (strain 342).